The following is a 129-amino-acid chain: Small ribosomal subunit protein uS11 (129 aa).

Belongs to the universal ribosomal protein uS11 family. As to quaternary structure, part of the 30S ribosomal subunit. Interacts with proteins S7 and S18. Binds to IF-3.

Functionally, located on the platform of the 30S subunit, it bridges several disparate RNA helices of the 16S rRNA. Forms part of the Shine-Dalgarno cleft in the 70S ribosome. The sequence is that of Small ribosomal subunit protein uS11 from Desulfitobacterium hafniense (strain DSM 10664 / DCB-2).